Consider the following 420-residue polypeptide: uncharacterized protein (420 aa).

The protein belongs to the mimivirus R160 family.

The protein resides in the virion. This is an uncharacterized protein from Acanthamoeba polyphaga mimivirus (APMV).